Consider the following 449-residue polypeptide: Putative F-box/FBD/LRR-repeat protein At3g49480 (449 aa).

The F-box domain maps to 11-59 (EDRISSLPDDLLVKILLCVPTKDAAATTFLSKRWRFVWRMLPRLNYIET). LRR repeat units lie at residues 60–91 (TSDVKSNTVWWFLEESFRFHKAPLLERLWIDL), 153–180 (RLTLSDKILVDVPCQVSLPSLRELDLFC), 182–206 (VYKDEDSHVKLLSSCPVLKHLKVTR), 235–260 (FREDSDMSDPFLVTDTPNLLSLHIFD), 275–302 (VTVVTDELFPSEKFMRPLSSVKYLALSP), and 327–352 (SEYDLLESLLVLLSKCSKLKVFLVDS). In terms of domain architecture, FBD spans 364 to 412 (WNQPSSIPRCLSSHLEIFEWDGYVGREDEKKIIRYILENSKYLKTAGIS).

This Arabidopsis thaliana (Mouse-ear cress) protein is Putative F-box/FBD/LRR-repeat protein At3g49480.